We begin with the raw amino-acid sequence, 444 residues long: C4-dicarboxylate transport protein (444 aa).

9 consecutive transmembrane segments (helical) span residues 15 to 35 (VIVA…FGVA), 46 to 66 (LIKM…IAGM), 78 to 98 (YALL…LIVV), 143 to 163 (IVGA…VIFG), 199 to 219 (PIGA…GSLV), 224 to 244 (LMIC…GGIA), 291 to 311 (VVGL…AIYL), 332 to 352 (ITLL…TGSG), and 354 to 374 (IVLA…LALI). The interval 422–444 (GIADTRPEDDLGVAEGPTPSNVK) is disordered.

This sequence belongs to the dicarboxylate/amino acid:cation symporter (DAACS) (TC 2.A.23) family.

It localises to the cell inner membrane. Its function is as follows. Responsible for the transport of dicarboxylates such as succinate, fumarate, and malate from the periplasm across the membrane. The sequence is that of C4-dicarboxylate transport protein from Pseudomonas fluorescens (strain Pf0-1).